The chain runs to 376 residues: Gibberellin 20 oxidase 4 (376 aa).

Residues aspartate 222–proline 322 enclose the Fe2OG dioxygenase domain. Fe cation contacts are provided by histidine 247, aspartate 249, and histidine 303. Arginine 313 is an active-site residue.

It belongs to the iron/ascorbate-dependent oxidoreductase family. GA20OX subfamily. It depends on Fe(2+) as a cofactor. L-ascorbate is required as a cofactor. As to expression, expressed in roots. Detected in leaves, inflorescences and siliques, but not in stems and dry seeds.

The enzyme catalyses gibberellin A12 + 2 2-oxoglutarate + 3 O2 + H(+) = gibberellin A9 + 2 succinate + 3 CO2 + 2 H2O. It carries out the reaction gibberellin A53 + 2 2-oxoglutarate + 3 O2 + H(+) = gibberellin A20 + 2 succinate + 3 CO2 + 2 H2O. Its pathway is plant hormone biosynthesis; gibberellin biosynthesis. Key oxidase enzyme in the biosynthesis of gibberellin that catalyzes the conversion of GA12 and GA53 to GA9 and GA20 respectively, via a three-step oxidation at C-20 of the GA skeleton. The chain is Gibberellin 20 oxidase 4 (GA20OX4) from Arabidopsis thaliana (Mouse-ear cress).